A 369-amino-acid chain; its full sequence is Xylene/toluene monooxygenase hydroxylase component XylM (369 aa).

A run of 3 helical transmembrane segments spans residues 8–28 (LIPVVTACGLIGFYYGGYWVW), 60–80 (LTQYLQLPLMIGLYGLLVFGV), and 91–111 (LQVAGCILSLAWLSGVPTLPV). 5 residues coordinate Fe cation: His-113, His-117, His-143, His-147, and His-148. A helical transmembrane segment spans residues 207 to 227 (VALLLALPGLVSYLGGPALGL). Fe cation-binding residues include His-282, His-285, and His-286. Residues 305-325 (MPSLFVCFLLGLIPPLWFALI) traverse the membrane as a helical segment.

This sequence belongs to the fatty acid desaturase type 1 family. AlkB subfamily. As to quaternary structure, the xylene/toluene monooxygenase is composed of two subunits: the electron transfer component XylA and the hydroxylase component XylM. The cofactor is Fe(2+).

Its subcellular location is the cell inner membrane. It carries out the reaction m-xylene + 2 reduced [2Fe-2S]-[ferredoxin] + O2 + 2 H(+) = 3-methylbenzyl alcohol + 2 oxidized [2Fe-2S]-[ferredoxin] + H2O. The catalysed reaction is p-xylene + 2 reduced [2Fe-2S]-[ferredoxin] + O2 + 2 H(+) = 4-methylbenzyl alcohol + 2 oxidized [2Fe-2S]-[ferredoxin] + H2O. The enzyme catalyses toluene + 2 reduced [2Fe-2S]-[ferredoxin] + O2 + 2 H(+) = benzyl alcohol + 2 oxidized [2Fe-2S]-[ferredoxin] + H2O. Functionally, component of a monooxygenase that catalyzes the first step in the degradation of xylenes and toluenes. XylM catalyzes the hydroxylation of the methyl side chain of xylenes and toluenes. The electrons are provided by the electron transfer component XylA. The best substrates are m-xylene and p-xylene, followed by toluene. Shows weak activity with o-xylene. In vitro, is also active with substituted compounds, such as chlorotoluenes. Cannot use benzyl alcohol. This is Xylene/toluene monooxygenase hydroxylase component XylM from Pseudomonas putida (Arthrobacter siderocapsulatus).